Consider the following 186-residue polypeptide: ADP-ribosylation factor-like protein alp41 (186 aa).

Residue Gly2 is the site of N-myristoyl glycine attachment. Residues 23 to 30 (GLDNAGKT), 66 to 70 (DIGGQ), and 125 to 128 (NKSD) contribute to the GTP site.

This sequence belongs to the small GTPase superfamily. Arf family.

It is found in the cytoplasm. The protein localises to the cytoskeleton. Its function is as follows. Has a role in the cofactor-dependent pathway of microtubule biogenesis. Required for growth polarity control. This chain is ADP-ribosylation factor-like protein alp41 (alp41), found in Schizosaccharomyces pombe (strain 972 / ATCC 24843) (Fission yeast).